The chain runs to 535 residues: uncharacterized protein (535 aa).

A helical membrane pass occupies residues 8 to 24 (LVVFGSLVFFFGLVKYF). A Glycyl lysine isopeptide (Lys-Gly) (interchain with G-Cter in ubiquitin) cross-link involves residue K50. Mn(2+) contacts are provided by D316, D327, H412, E452, and E493.

The protein belongs to the peptidase M24B family. The cofactor is Mn(2+).

Its subcellular location is the membrane. This is an uncharacterized protein from Saccharomyces cerevisiae (strain ATCC 204508 / S288c) (Baker's yeast).